The following is a 290-amino-acid chain: Elongation factor Ts (290 aa).

Positions 87–90 are involved in Mg(2+) ion dislocation from EF-Tu; that stretch reads TDFV.

It belongs to the EF-Ts family.

It localises to the cytoplasm. Functionally, associates with the EF-Tu.GDP complex and induces the exchange of GDP to GTP. It remains bound to the aminoacyl-tRNA.EF-Tu.GTP complex up to the GTP hydrolysis stage on the ribosome. This chain is Elongation factor Ts (tsf), found in Treponema pallidum (strain Nichols).